Reading from the N-terminus, the 420-residue chain is S-adenosylmethionine synthase (420 aa).

His-16 is a binding site for ATP. Asp-18 lines the Mg(2+) pocket. Residue Glu-44 coordinates K(+). Positions 57 and 100 each coordinate L-methionine. A flexible loop region spans residues 100–110; sequence QSPDIAQGVNT. ATP-binding positions include 175–177, 251–252, Asp-260, 266–267, Ala-283, and Lys-287; these read DGK, KF, and RK. Position 260 (Asp-260) interacts with L-methionine. Lys-291 lines the L-methionine pocket.

The protein belongs to the AdoMet synthase family. Homotetramer; dimer of dimers. Mg(2+) serves as cofactor. The cofactor is K(+).

Its subcellular location is the cytoplasm. It catalyses the reaction L-methionine + ATP + H2O = S-adenosyl-L-methionine + phosphate + diphosphate. The protein operates within amino-acid biosynthesis; S-adenosyl-L-methionine biosynthesis; S-adenosyl-L-methionine from L-methionine: step 1/1. Its function is as follows. Catalyzes the formation of S-adenosylmethionine (AdoMet) from methionine and ATP. The overall synthetic reaction is composed of two sequential steps, AdoMet formation and the subsequent tripolyphosphate hydrolysis which occurs prior to release of AdoMet from the enzyme. The sequence is that of S-adenosylmethionine synthase from Trichormus variabilis (strain ATCC 29413 / PCC 7937) (Anabaena variabilis).